Consider the following 460-residue polypeptide: Methionine aminopeptidase 2-1 (460 aa).

Residues 1–90 (MGSKSPNGED…SAQAAQQTAP (90 aa)) form a disordered region. The segment covering 30-39 (SAAASGLLRG) has biased composition (low complexity). The segment covering 42-52 (EDQDEDGDDDE) has biased composition (acidic residues). A compositionally biased stretch (basic residues) spans 69–81 (TKKRRRNNKKKKS). His212 is a substrate binding site. Residues Asp233, Asp244, and His313 each coordinate a divalent metal cation. Substrate is bound at residue His321. Residues Glu346 and Glu441 each contribute to the a divalent metal cation site.

It belongs to the peptidase M24A family. Methionine aminopeptidase eukaryotic type 2 subfamily. The cofactor is Co(2+). Zn(2+) is required as a cofactor. Requires Mn(2+) as cofactor. It depends on Fe(2+) as a cofactor.

The protein localises to the cytoplasm. The enzyme catalyses Release of N-terminal amino acids, preferentially methionine, from peptides and arylamides.. Its function is as follows. Cotranslationally removes the N-terminal methionine from nascent proteins. The N-terminal methionine is often cleaved when the second residue in the primary sequence is small and uncharged (Met-Ala-, Cys, Gly, Pro, Ser, Thr, or Val). In Leptosphaeria maculans (strain JN3 / isolate v23.1.3 / race Av1-4-5-6-7-8) (Blackleg fungus), this protein is Methionine aminopeptidase 2-1.